Reading from the N-terminus, the 1288-residue chain is 5-oxoprolinase (1288 aa).

At Thr151 the chain carries Phosphothreonine. Positions 1249 to 1269 (GGGGYGDPEDPAPLPGSPLQP) are disordered. A Phosphoserine modification is found at Ser1265.

This sequence belongs to the oxoprolinase family. Homodimer. Expressed in coronary artery and kidney.

It is found in the cytoplasm. The protein localises to the cytosol. It catalyses the reaction 5-oxo-L-proline + ATP + 2 H2O = L-glutamate + ADP + phosphate + H(+). Catalyzes the cleavage of 5-oxo-L-proline to form L-glutamate coupled to the hydrolysis of ATP to ADP and inorganic phosphate. This Bos taurus (Bovine) protein is 5-oxoprolinase (OPLAH).